Consider the following 437-residue polypeptide: Phosphomethylpyrimidine synthase (437 aa).

Residues Asn-69, Met-98, Tyr-127, His-163, 185–187 (SRG), 226–229 (DACR), and Glu-265 each bind substrate. His-269 is a binding site for Zn(2+). Tyr-292 contacts substrate. Position 333 (His-333) interacts with Zn(2+). [4Fe-4S] cluster-binding residues include Cys-409, Cys-412, and Cys-416.

This sequence belongs to the ThiC family. The cofactor is [4Fe-4S] cluster.

The enzyme catalyses 5-amino-1-(5-phospho-beta-D-ribosyl)imidazole + S-adenosyl-L-methionine = 4-amino-2-methyl-5-(phosphooxymethyl)pyrimidine + CO + 5'-deoxyadenosine + formate + L-methionine + 3 H(+). It participates in cofactor biosynthesis; thiamine diphosphate biosynthesis. In terms of biological role, catalyzes the synthesis of the hydroxymethylpyrimidine phosphate (HMP-P) moiety of thiamine from aminoimidazole ribotide (AIR) in a radical S-adenosyl-L-methionine (SAM)-dependent reaction. This is Phosphomethylpyrimidine synthase from Clostridium botulinum (strain ATCC 19397 / Type A).